We begin with the raw amino-acid sequence, 155 residues long: Transcriptional repressor NrdR (155 aa).

Residues Cys3 to Cys34 fold into a zinc finger. The ATP-cone domain occupies Pro49 to Asp139.

It belongs to the NrdR family. Requires Zn(2+) as cofactor.

Functionally, negatively regulates transcription of bacterial ribonucleotide reductase nrd genes and operons by binding to NrdR-boxes. This chain is Transcriptional repressor NrdR, found in Legionella pneumophila (strain Lens).